Reading from the N-terminus, the 47-residue chain is Potassium channel toxin gamma-KTx 5.2 (47 aa).

4 disulfides stabilise this stretch: C5–C23, C11–C34, C20–C39, and C24–C41.

Belongs to the ergtoxin family. Gamma-KTx 5 subfamily. In terms of tissue distribution, expressed by the venom gland.

The protein resides in the secreted. Functionally, reversibly blocks Kv11/ERG potassium channels. The sequence is that of Potassium channel toxin gamma-KTx 5.2 from Centruroides gracilis (Slenderbrown scorpion).